The sequence spans 128 residues: uncharacterized protein (128 aa).

The interval 24-43 (KRTQNNTEQASRAINSPLQS) is disordered. A compositionally biased stretch (polar residues) spans 26–43 (TQNNTEQASRAINSPLQS).

This is an uncharacterized protein from Homo sapiens (Human).